The primary structure comprises 475 residues: V-type ATP synthase beta chain (475 aa).

This sequence belongs to the ATPase alpha/beta chains family.

Produces ATP from ADP in the presence of a proton gradient across the membrane. The V-type beta chain is a regulatory subunit. The polypeptide is V-type ATP synthase beta chain (Anaeromyxobacter dehalogenans (strain 2CP-C)).